Here is a 309-residue protein sequence, read N- to C-terminus: 2-phospho-L-lactate transferase (309 aa).

7,8-didemethyl-8-hydroxy-5-deazariboflavin contacts are provided by aspartate 48 and lysine 87.

Belongs to the CofD family. Homodimer. The cofactor is Mg(2+).

It carries out the reaction (2S)-lactyl-2-diphospho-5'-guanosine + 7,8-didemethyl-8-hydroxy-5-deazariboflavin = oxidized coenzyme F420-0 + GMP + H(+). It functions in the pathway cofactor biosynthesis; coenzyme F420 biosynthesis. Catalyzes the transfer of the 2-phospholactate moiety from (2S)-lactyl-2-diphospho-5'-guanosine to 7,8-didemethyl-8-hydroxy-5-deazariboflavin (FO) with the formation of oxidized coenzyme F420-0 and GMP. This Methanosarcina barkeri (strain Fusaro / DSM 804) protein is 2-phospho-L-lactate transferase.